The following is a 421-amino-acid chain: Testin (421 aa).

One can recognise a PET domain in the interval 92 to 199; that stretch reads MILTNPVAAK…GDVKLPCEMD (108 aa). Positions 133–164 are disordered; the sequence is EKQPVAGSEGAQYRKKQLAKQLPAHDQDPSKC. Basic and acidic residues predominate over residues 155–164; sequence PAHDQDPSKC. LIM zinc-binding domains follow at residues 234–297, 299–359, and 362–421; these read YSCY…CDSE, PRCA…NHAV, and QGCH…KMMS.

This sequence belongs to the prickle / espinas / testin family. As to quaternary structure, interacts via LIM domain 1 with ZYX. Interacts (via LIM domain 3) with ENAH and VASP. Interacts with ALKBH4, talin, actin, alpha-actinin, GRIP1 and PXN. Interacts (via LIM domain 2) with ACTL7A (via N-terminus). Heterodimer with ACTL7A; the heterodimer interacts with ENAH to form a heterotrimer.

It localises to the cytoplasm. The protein localises to the cell junction. The protein resides in the focal adhesion. Functionally, scaffold protein that may play a role in cell adhesion, cell spreading and in the reorganization of the actin cytoskeleton. Plays a role in the regulation of cell proliferation. May act as a tumor suppressor. This chain is Testin (TES), found in Colobus guereza (Mantled guereza).